We begin with the raw amino-acid sequence, 248 residues long: Granzyme C (248 aa).

An N-terminal signal peptide occupies residues 1–18; it reads MPPVLILLTLLLPLRAGA. The propeptide occupies 19–20; that stretch reads EE. Residues 21-246 enclose the Peptidase S1 domain; the sequence is IIGGNEISPH…FVSWIKKTMK (226 aa). An intrachain disulfide couples Cys-50 to Cys-66. Residues His-65 and Asp-109 each act as charge relay system in the active site. 2 cysteine pairs are disulfide-bonded: Cys-143–Cys-210 and Cys-174–Cys-189. Ser-204 serves as the catalytic Charge relay system.

Belongs to the peptidase S1 family. Granzyme subfamily.

It is found in the cytolytic granule. Its function is as follows. This enzyme is probably necessary for target cell lysis in cell-mediated immune responses. This is Granzyme C (Gzmc) from Mus musculus (Mouse).